We begin with the raw amino-acid sequence, 179 residues long: Embryo-specific protein ATS3A (179 aa).

A signal peptide spans 1–22 (MLRLAIPLFLFALCSFTLFSSA). Positions 48 to 158 (CSYTVIIKTS…NSVWYGFNVC (111 aa)) constitute a PLAT domain.

Interacts with EULS3 (via N-terminus). As to expression, expressed in roots, rosette leaves, stems, cauline leaves and flowers.

It localises to the secreted. Functionally, may play a role during embryo development. The protein is Embryo-specific protein ATS3A of Arabidopsis thaliana (Mouse-ear cress).